Here is a 98-residue protein sequence, read N- to C-terminus: Integration host factor subunit alpha (98 aa).

Positions 51–71 (NFDLRDKNERPGRNPKTGEDI) are disordered. The segment covering 53–69 (DLRDKNERPGRNPKTGE) has biased composition (basic and acidic residues).

It belongs to the bacterial histone-like protein family. As to quaternary structure, heterodimer of an alpha and a beta chain.

This protein is one of the two subunits of integration host factor, a specific DNA-binding protein that functions in genetic recombination as well as in transcriptional and translational control. The chain is Integration host factor subunit alpha from Vibrio cholerae serotype O1 (strain ATCC 39541 / Classical Ogawa 395 / O395).